Reading from the N-terminus, the 1005-residue chain is DNA double-strand break repair Rad50 ATPase (1005 aa).

Residues lysine 14, 35–40 (GSGKSS), 62–64 (ITK), and glutamine 134 each bind ATP. Coiled-coil stretches lie at residues 189-230 (KENY…IEKL), 292-321 (LVDEIRKIESRLRELKSHYEDYLKLTKQLE), 346-379 (LDTLLNKIKDEIERVETIKDLLEELKNLNEEIEK), and 404-498 (AVEY…LKEV). The 98-residue stretch at 457-554 (IEEKKKVLEN…DIEKLKKEID (98 aa)) folds into the Zinc-hook domain. Zn(2+) contacts are provided by cysteine 502 and cysteine 505. Coiled-coil stretches lie at residues 523-600 (TQLN…YVIN), 656-692 (KEKCREELNKLREDEREINRLKDKLNELKNKEKELIE), and 800-834 (RQELDNVREQKTEIETGIEYLKKDVESLKARLKEM).

This sequence belongs to the SMC family. RAD50 subfamily. In terms of assembly, homodimer. Forms a heterotetramer composed of two Mre11 subunits and two Rad50 subunits. Requires Zn(2+) as cofactor.

In terms of biological role, part of the Rad50/Mre11 complex, which is involved in the early steps of DNA double-strand break (DSB) repair. The complex may facilitate opening of the processed DNA ends to aid in the recruitment of HerA and NurA. Rad50 controls the balance between DNA end bridging and DNA resection via ATP-dependent structural rearrangements of the Rad50/Mre11 complex. This is DNA double-strand break repair Rad50 ATPase from Methanocaldococcus jannaschii (strain ATCC 43067 / DSM 2661 / JAL-1 / JCM 10045 / NBRC 100440) (Methanococcus jannaschii).